The chain runs to 432 residues: Adenylosuccinate synthetase (432 aa).

Residues 12–18 and 40–42 each bind GTP; these read GDEGKGK and GHT. The active-site Proton acceptor is the Asp13. Mg(2+) contacts are provided by Asp13 and Gly40. IMP is bound by residues 13–16, 38–41, Thr129, Arg143, Gln224, Thr239, and Arg303; these read DEGK and NAGH. His41 serves as the catalytic Proton donor. 299–305 lines the substrate pocket; it reads VTTGRRR. GTP contacts are provided by residues Arg305, 331–333, and 413–415; these read KLD and GVG.

Belongs to the adenylosuccinate synthetase family. In terms of assembly, homodimer. Mg(2+) is required as a cofactor.

The protein localises to the cytoplasm. It catalyses the reaction IMP + L-aspartate + GTP = N(6)-(1,2-dicarboxyethyl)-AMP + GDP + phosphate + 2 H(+). It functions in the pathway purine metabolism; AMP biosynthesis via de novo pathway; AMP from IMP: step 1/2. In terms of biological role, plays an important role in the de novo pathway of purine nucleotide biosynthesis. Catalyzes the first committed step in the biosynthesis of AMP from IMP. The protein is Adenylosuccinate synthetase of Mycobacterium tuberculosis (strain CDC 1551 / Oshkosh).